Here is a 404-residue protein sequence, read N- to C-terminus: Glucosyl-3-phosphoglycerate synthase (404 aa).

Aspartate 146 is a binding site for a divalent metal cation. 188-190 (GRV) contacts (2R)-3-phosphoglycerate. Histidine 270 contributes to the a divalent metal cation binding site.

It belongs to the glycosyltransferase 2 family. Mn(2+) serves as cofactor. Requires Co(2+) as cofactor. Mg(2+) is required as a cofactor.

The catalysed reaction is an NDP-alpha-D-glucose + (2R)-3-phosphoglycerate = (2R)-2-O-(alpha-D-glucopyranosyl)-3-phospho-glycerate + a ribonucleoside 5'-diphosphate + H(+). Functionally, involved in the biosynthesis of 6-O-methylglucose lipopolysaccarides (MGLPs). Catalyzes the transfer of a glucose (Glc) moiety from uridine diphosphate (UDP-Glc) to the position 2 of 3-phospho-D-glycerate (3-PGA) to form glucosyl-3-phosphoglycerate (GPG). This Methanococcoides burtonii (strain DSM 6242 / NBRC 107633 / OCM 468 / ACE-M) protein is Glucosyl-3-phosphoglycerate synthase.